Here is a 353-residue protein sequence, read N- to C-terminus: uncharacterized protein (353 aa).

Positions 1 to 24 (MRVVKRIAVACYLGITIFSGIAFG) are cleaved as a signal peptide.

It belongs to the chlamydial CPn_1058/CT_355/TC_0634 family.

This is an uncharacterized protein from Chlamydia muridarum (strain MoPn / Nigg).